The primary structure comprises 83 residues: Type 3 secretion system needle filament protein (83 aa).

Belongs to the SctF family. In terms of assembly, the core secretion machinery of the T3SS is composed of approximately 20 different proteins, including cytoplasmic components, a base, an export apparatus and a needle. This subunit polymerizes and forms the helical needle filament. Interacts with the needle tip protein IpaD/SctA. Interacts with the export apparatus components SpaP/SctR, SpaQ/SctS and SpaR/SctT.

The protein resides in the secreted. Its subcellular location is the cell surface. In terms of biological role, component of the type III secretion system (T3SS), also called injectisome, which is used to inject bacterial effector proteins into eukaryotic host cells. MxiH/SctF forms the external needle filament that protrudes from the bacterial surface. During infection, can induce innate immune responses. The needle proteins interact with host TLR2 or TLR4, and induce signaling by NF-kappa-B and/or AP-1. This activation is MyD88 dependent and results in increased expression of cytokines, including TNF-alpha, IL-6 and IL-8. The sequence is that of Type 3 secretion system needle filament protein from Shigella flexneri.